We begin with the raw amino-acid sequence, 542 residues long: Esterase S (542 aa).

The signal sequence occupies residues 1–22; it reads MTQILLPIALLCLFAASTLSNP. Residues cysteine 81 and cysteine 100 are joined by a disulfide bond. Asparagine 110 is a glycosylation site (N-linked (GlcNAc...) asparagine). Serine 204 acts as the Acyl-ester intermediate in catalysis. Cysteine 256 and cysteine 268 are joined by a disulfide. The N-linked (GlcNAc...) asparagine glycan is linked to asparagine 396. Cysteine 507 and cysteine 528 form a disulfide bridge.

Belongs to the type-B carboxylesterase/lipase family. Monomer. In terms of tissue distribution, specifically expressed in the ejaculatory bulbs of male.

It localises to the secreted. The catalysed reaction is a carboxylic ester + H2O = an alcohol + a carboxylate + H(+). In terms of biological role, transferred from the ejaculatory bulbs of males to the female genitals upon copulation, plays an important role in the reproductive biology. The protein is Esterase S (EstS) of Drosophila virilis (Fruit fly).